The sequence spans 173 residues: UPF0316 protein Amet_0954 (173 aa).

The next 3 membrane-spanning stretches (helical) occupy residues Leu3–Val23, Ala38–Leu58, and Pro61–Ile81.

This sequence belongs to the UPF0316 family.

The protein localises to the cell membrane. The chain is UPF0316 protein Amet_0954 from Alkaliphilus metalliredigens (strain QYMF).